The following is a 339-amino-acid chain: Phenylalanine--tRNA ligase alpha subunit (339 aa).

Mg(2+) is bound at residue Glu-247.

This sequence belongs to the class-II aminoacyl-tRNA synthetase family. Phe-tRNA synthetase alpha subunit type 1 subfamily. As to quaternary structure, tetramer of two alpha and two beta subunits. Requires Mg(2+) as cofactor.

The protein localises to the cytoplasm. It carries out the reaction tRNA(Phe) + L-phenylalanine + ATP = L-phenylalanyl-tRNA(Phe) + AMP + diphosphate + H(+). The protein is Phenylalanine--tRNA ligase alpha subunit of Deinococcus deserti (strain DSM 17065 / CIP 109153 / LMG 22923 / VCD115).